A 382-amino-acid polypeptide reads, in one-letter code: F-box protein At3g19470 (382 aa).

The region spanning Met1 to His44 is the F-box domain.

The chain is F-box protein At3g19470 from Arabidopsis thaliana (Mouse-ear cress).